A 397-amino-acid polypeptide reads, in one-letter code: Elongation factor Tu (397 aa).

One can recognise a tr-type G domain in the interval 10-207 (KPHVNIGTIG…ACDSYIPEPQ (198 aa)). The G1 stretch occupies residues 19 to 26 (GHIDHGKT). Residue 19-26 (GHIDHGKT) coordinates GTP. Thr-26 serves as a coordination point for Mg(2+). The G2 stretch occupies residues 60-64 (GITIA). Positions 81–84 (DCPG) are G3. Residues 81 to 85 (DCPGH) and 136 to 139 (NKCD) contribute to the GTP site. The interval 136–139 (NKCD) is G4. Residues 174 to 176 (SAL) are G5.

It belongs to the TRAFAC class translation factor GTPase superfamily. Classic translation factor GTPase family. EF-Tu/EF-1A subfamily. In terms of assembly, monomer.

It is found in the cytoplasm. It catalyses the reaction GTP + H2O = GDP + phosphate + H(+). GTP hydrolase that promotes the GTP-dependent binding of aminoacyl-tRNA to the A-site of ribosomes during protein biosynthesis. The protein is Elongation factor Tu of Nitratidesulfovibrio vulgaris (strain DSM 19637 / Miyazaki F) (Desulfovibrio vulgaris).